The following is a 303-amino-acid chain: Methionyl-tRNA formyltransferase (303 aa).

110–113 serves as a coordination point for (6S)-5,6,7,8-tetrahydrofolate; the sequence is SLLP.

This sequence belongs to the Fmt family.

It catalyses the reaction L-methionyl-tRNA(fMet) + (6R)-10-formyltetrahydrofolate = N-formyl-L-methionyl-tRNA(fMet) + (6S)-5,6,7,8-tetrahydrofolate + H(+). Attaches a formyl group to the free amino group of methionyl-tRNA(fMet). The formyl group appears to play a dual role in the initiator identity of N-formylmethionyl-tRNA by promoting its recognition by IF2 and preventing the misappropriation of this tRNA by the elongation apparatus. The protein is Methionyl-tRNA formyltransferase of Ehrlichia ruminantium (strain Welgevonden).